Consider the following 763-residue polypeptide: Phosphoglycerol transferase I (763 aa).

The next 4 helical transmembrane spans lie at leucine 4–tryptophan 19, tryptophan 26–serine 48, tyrosine 76–leucine 98, and tyrosine 110–threonine 132.

The protein belongs to the OpgB family.

It is found in the cell inner membrane. It carries out the reaction a phosphatidylglycerol + a membrane-derived-oligosaccharide D-glucose = a 1,2-diacyl-sn-glycerol + a membrane-derived-oligosaccharide 6-(glycerophospho)-D-glucose.. It participates in glycan metabolism; osmoregulated periplasmic glucan (OPG) biosynthesis. In terms of biological role, transfers a phosphoglycerol residue from phosphatidylglycerol to the membrane-bound nascent glucan backbones. The sequence is that of Phosphoglycerol transferase I from Salmonella typhi.